Reading from the N-terminus, the 369-residue chain is Probable dual-specificity RNA methyltransferase RlmN (369 aa).

E108 acts as the Proton acceptor in catalysis. Residues 114-351 (YPDRATLCIS…IAQGVSCTVR (238 aa)) enclose the Radical SAM core domain. A disulfide bridge connects residues C121 and C362. Residues C128, C132, and C135 each contribute to the [4Fe-4S] cluster site. S-adenosyl-L-methionine is bound by residues 183–184 (GE), S217, 240–242 (SLH), and N319. C362 acts as the S-methylcysteine intermediate in catalysis.

It belongs to the radical SAM superfamily. RlmN family. [4Fe-4S] cluster serves as cofactor.

It is found in the cytoplasm. The catalysed reaction is adenosine(2503) in 23S rRNA + 2 reduced [2Fe-2S]-[ferredoxin] + 2 S-adenosyl-L-methionine = 2-methyladenosine(2503) in 23S rRNA + 5'-deoxyadenosine + L-methionine + 2 oxidized [2Fe-2S]-[ferredoxin] + S-adenosyl-L-homocysteine. The enzyme catalyses adenosine(37) in tRNA + 2 reduced [2Fe-2S]-[ferredoxin] + 2 S-adenosyl-L-methionine = 2-methyladenosine(37) in tRNA + 5'-deoxyadenosine + L-methionine + 2 oxidized [2Fe-2S]-[ferredoxin] + S-adenosyl-L-homocysteine. Functionally, specifically methylates position 2 of adenine 2503 in 23S rRNA and position 2 of adenine 37 in tRNAs. The polypeptide is Probable dual-specificity RNA methyltransferase RlmN (Rhodococcus erythropolis (strain PR4 / NBRC 100887)).